The primary structure comprises 274 residues: Transcription factor Ovo-like 2 (274 aa).

Over residues 1–11 (MPKVFLVKRRS) the composition is skewed to basic residues. The tract at residues 1-88 (MPKVFLVKRR…ETPELHDAQG (88 aa)) is disordered. Over residues 18 to 29 (SWDELPDDKRAD) the composition is skewed to basic and acidic residues. Residues 50–74 (DGGSSSGCSSSAGEPGGAESSSSPR) are compositionally biased toward low complexity. 4 C2H2-type zinc fingers span residues 118 to 140 (HNCD…LKCH), 146 to 168 (HLCT…VRTH), 174 to 197 (YKCE…KKIH), and 213 to 236 (YVCE…NSDH). Ser268 carries the post-translational modification Phosphoserine.

It belongs to the krueppel C2H2-type zinc-finger protein family. Interacts (via zinc-finger domains) with CEBPA (via bZIP domain); the interaction inhibits the transcription factor activity of CEBPA and is required to repress adipogenesis. In terms of tissue distribution, expressed highly in testis, specifically in spermatocytes. Expressed also in skin and at lower levels in the ovary. Expressed in adipose tissues. Expression is lower than in testis and a relatively higher expression level is detected in the stromal vascular fraction (SVF) than in fat cells themselves.

It localises to the nucleus. Functionally, zinc-finger transcription repressor factor. Plays a critical role in maintaining the identity of epithelial lineages by suppressing epithelial-to mesenchymal transition (EMT) mainly through the repression of ZEB1, an EMT inducer. Positively regulates neuronal differentiation. Suppresses cell cycling and terminal differentiation of keratinocytes by directly repressing MYC and NOTCH1. Important for the correct development of primordial germ cells in embryos. Plays dual functions in thermogenesis and adipogenesis to maintain energy balance. Essential for brown/beige adipose tissue-mediated thermogenesis, is necessary for the development of brown adipocytes. In white adipose tissues, limits adipogenesis by blocking CEBPA binding to its transcriptional targets and inhibiting its transcription factor activity. In Mus musculus (Mouse), this protein is Transcription factor Ovo-like 2.